The sequence spans 138 residues: Basic phospholipase A2 homolog MjTX-I (138 aa).

Residues 1–16 (MRTLWIMAVLLVGVEG) form the signal peptide. Residue Val34 coordinates suramin. Cystine bridges form between Cys42–Cys132, Cys44–Cys60, Cys59–Cys111, Cys65–Cys138, Cys66–Cys104, Cys73–Cys97, and Cys91–Cys102. Residue Asn43 participates in varespladib binding. Suramin-binding residues include Gly45 and Gly48. Positions 63 and 64 each coordinate varespladib. Lys85 contributes to the suramin binding site.

It belongs to the phospholipase A2 family. Group II subfamily. K49 sub-subfamily. In terms of assembly, monomer in solution. Homodimer; non-covalently linked (probable conventional/extended dimer conformation). Homotetramer (dimer of homodimer (probable conventional/extended dimer conformation)); non-covalently linked. Homooligomer. In terms of tissue distribution, expressed by the venom gland.

The protein localises to the secreted. Myotoxin activity is inhibited by suramin and varespladib. Inhibition by suramin may be caused by (i) distortion of MDiS from both monomers impairing the membrane disruption mechanism by the toxin and (ii) surface electrostatic changes of the complex that interfere with the toxin membrane dockage process (putative-MDoS is partially hidden). Inhibition by varespladib is probably through varespladib binding to MDoS. In terms of biological role, snake venom phospholipase A2 homolog that lacks enzymatic activity. In vivo, it displays local myotoxin and edema-inducing activities and is lethal by intraperitoneal injection. The myotoxicity effect is weaker in comparison to other myotoxins, probably due to the formation of high molecular weight complexes and to the oligomeric conformation (conventional dimer). It shows specificity toward neurons and myotubes, but not on a variety of other cell types. This PLA2 excites a cohort of sensory neurons via ATP release and consequent activation of P2RX2 and/or P2RX3 purinergic receptors. Pannexin hemichannels act as downstream mediators of toxin-evoked ATP release. In vivo, it elicits nonneurogenic inflammatory pain, thermal hyperalgesia, and mechanical allodynia, of which the latter is completely dependent on purinergic signaling. This Bothrops moojeni (Lance-headed viper) protein is Basic phospholipase A2 homolog MjTX-I.